The chain runs to 301 residues: Mitochondrial ornithine transporter 1 (301 aa).

The next 6 helical transmembrane spans lie at 5–25, 68–88, 110–130, 168–188, 207–227, and 237–257; these read PAIQ…ACVL, SPAL…YGFC, AAAG…TELV, GFYH…FFFF, LGPV…WLAV, and IQVL…LSIV. 3 Solcar repeats span residues 7–91, 104–197, and 207–293; these read IQAA…CQQV, LSDL…SRSF, and LGPV…SRKL.

The protein belongs to the mitochondrial carrier (TC 2.A.29) family. Widely expressed, with highest levels in the liver, testis and kidney. In the brain, expressed at high levels in the hypothalamus.

Its subcellular location is the mitochondrion inner membrane. It is found in the mitochondrion membrane. The catalysed reaction is L-citrulline(in) + L-ornithine(out) + H(+)(in) = L-citrulline(out) + L-ornithine(in) + H(+)(out). The enzyme catalyses L-ornithine(in) + L-arginine(out) = L-ornithine(out) + L-arginine(in). It catalyses the reaction L-ornithine(out) + L-lysine(in) = L-ornithine(in) + L-lysine(out). It carries out the reaction L-lysine(out) + H(+)(in) = L-lysine(in) + H(+)(out). The catalysed reaction is L-ornithine(out) + H(+)(in) = L-ornithine(in) + H(+)(out). Its activity is regulated as follows. Inhibited by pyridoxal 5'-phosphate as well as by mercurials (mersalyl, p-chloromercuribenzene sulfonate, and mercuric chloride), N-ethylmaleimide and spermine. In terms of biological role, mitochondrial ornithine-citrulline antiporter. Catalyzes the exchange between cytosolic ornithine and mitochondrial citrulline plus an H(+), the proton compensates the positive charge of ornithine thus leading to an electroneutral transport. Plays a crucial role in the urea cycle, by connecting the cytosolic and the intramitochondrial reactions of the urea cycle. Lysine and arginine are also transported by the antiport mechanism. In addition, catalyzes an electroneutral exchange of ornithine or lysine for H(+), a reaction driven by the pH gradient across the inner membrane. The protein is Mitochondrial ornithine transporter 1 of Mus musculus (Mouse).